Here is a 643-residue protein sequence, read N- to C-terminus: Uromodulin (643 aa).

A signal peptide spans 1 to 26 (MKCLFSPNFMWMAAVVTSWVIIPAAT). One can recognise an EGF-like 1 domain in the interval 32-66 (KSCSECHSNATCTVDGAATTCACQEGFTGDGLECV). Cystine bridges form between C34–C43, C37–C52, C54–C65, C71–C85, C79–C94, C96–C108, C114–C128, C122–C137, C139–C150, C152–C163, C157–C172, C176–C269, C197–C284, C219–C257, C225–C289, C250–C258, C299–C308, C302–C317, C319–C349, C337–C427, and C368–C391. A glycan (N-linked (GlcNAc...) asparagine) is linked at N40. The 43-residue stretch at 67–109 (DLDECAVLGAHNCSATKSCVNTLGSYTCVCPEGFLLSSELGCE) folds into the EGF-like 2; calcium-binding domain. N78 is a glycosylation site (N-linked (GlcNAc...) asparagine). An EGF-like 3; calcium-binding domain is found at 110-151 (DVDECAEPGLSRCHALATCINGEGNYSCVCPAGYLGDGRHCE). Residue N134 is glycosylated (N-linked (GlcNAc...) asparagine). The tract at residues 152 to 173 (CSPGSCGPGLDCVREGDALVCV) is beta hairpin. Residues 174 to 293 (DPCQVHRILD…CHLAYCTDPS (120 aa)) form a D10C region. The N-linked (GlcNAc...) asparagine glycan is linked to N234. A glycan (N-linked (GlcNAc...) asparagine) is linked at N277. One can recognise an EGF-like 4 domain in the interval 294-325 (SVEGTCEECRVDEDCKSDNGEWHCQCKQDFNV). The N-linked (GlcNAc...) asparagine glycan is linked to N324. The tract at residues 336 to 431 (ECGVDDIKLS…RINFACSYPL (96 aa)) is ZP-N. The ZP domain occupies 336 to 587 (ECGVDDIKLS…EKCRPTCPET (252 aa)). N-linked (GlcNAc...) asparagine glycans are attached at residues N398 and N449. The flexible ZP-N/ZP-C linker; important for secretion and polymerization into filaments stretch occupies residues 432–455 (DMKVSLKTSLQPMVSALNISMGGT). An internal hydrophobic patch (IHP) region spans residues 456-466 (GTFTVRMALFQ). Residues 456–587 (GTFTVRMALF…EKCRPTCPET (132 aa)) form a ZP-C region. 3 cysteine pairs are disulfide-bonded: C508–C568, C529–C584, and C573–C580. The N-linked (GlcNAc...) asparagine glycan is linked to N515. Residues 588-591 (RFRS) are essential for cleavage by HPN. Residues 600 to 608 (VLNLGPITR) are external hydrophobic patch (EHP); regulates polymerization into filaments. S621 carries GPI-anchor amidated serine lipidation. A propeptide spans 622–643 (SLGLLQVWLPLLLSATLTLMSP) (removed in mature form).

Homodimer that then polymerizes into long filaments. The filaments can additionally assemble laterally to form a sheet. The filaments consist of a zigzag-shaped backbone with laterally protruding arms which interact with bacterial adhesin fimH. Two fimH molecules can bind to a single UMOD monomer. In terms of processing, N-glycosylated. Proteolytically cleaved at a conserved C-terminal proteolytic cleavage site to generate the secreted form found in urine. This cleavage is catalyzed by HPN.

The protein resides in the apical cell membrane. The protein localises to the basolateral cell membrane. It localises to the cell projection. Its subcellular location is the cilium membrane. It is found in the secreted. In terms of biological role, functions in biogenesis and organization of the apical membrane of epithelial cells of the thick ascending limb of Henle's loop (TALH), where it promotes formation of complex filamentous gel-like structure that may play a role in the water barrier permeability. May serve as a receptor for binding and endocytosis of cytokines (IL-1, IL-2) and TNF. Facilitates neutrophil migration across renal epithelia. Its function is as follows. In the urine, may contribute to colloid osmotic pressure, retards passage of positively charged electrolytes, and inhibits formation of liquid containing supersaturated salts and subsequent formation of salt crystals. Protects against urinary tract infections by binding to type 1 fimbriated E.coli. Binds to bacterial adhesin fimH which mediates the stable formation of bacterial aggregates, prevents the binding of E.coli to uroplakins UPK1A and UPK1B which act as urothelial receptors for type I fimbriae, and allows for pathogen clearance through micturation. Also promotes aggregation of other bacteria including K.pneumoniae, P.aeruginosa and S.mitis and so may also protect against other uropathogens. This Bos taurus (Bovine) protein is Uromodulin (UMOD).